A 349-amino-acid polypeptide reads, in one-letter code: UDP-N-acetylenolpyruvoylglucosamine reductase (349 aa).

Residues 26-197 (FDARARVAAR…VAVTFRLPKA (172 aa)) form the FAD-binding PCMH-type domain. The active site involves R173. S249 acts as the Proton donor in catalysis. Residue E345 is part of the active site.

Belongs to the MurB family. The cofactor is FAD.

The protein localises to the cytoplasm. It carries out the reaction UDP-N-acetyl-alpha-D-muramate + NADP(+) = UDP-N-acetyl-3-O-(1-carboxyvinyl)-alpha-D-glucosamine + NADPH + H(+). Its pathway is cell wall biogenesis; peptidoglycan biosynthesis. In terms of biological role, cell wall formation. In Burkholderia pseudomallei (strain 1710b), this protein is UDP-N-acetylenolpyruvoylglucosamine reductase.